Here is a 126-residue protein sequence, read N- to C-terminus: Large ribosomal subunit protein uL22 (126 aa).

It belongs to the universal ribosomal protein uL22 family. As to quaternary structure, part of the 50S ribosomal subunit.

In terms of biological role, this protein binds specifically to 23S rRNA; its binding is stimulated by other ribosomal proteins, e.g. L4, L17, and L20. It is important during the early stages of 50S assembly. It makes multiple contacts with different domains of the 23S rRNA in the assembled 50S subunit and ribosome. Its function is as follows. The globular domain of the protein is located near the polypeptide exit tunnel on the outside of the subunit, while an extended beta-hairpin is found that lines the wall of the exit tunnel in the center of the 70S ribosome. The chain is Large ribosomal subunit protein uL22 from Maricaulis maris (strain MCS10) (Caulobacter maris).